We begin with the raw amino-acid sequence, 338 residues long: Glyceraldehyde-3-phosphate dehydrogenase (338 aa).

NAD(+)-binding positions include 12 to 13, Asp-38, and Ser-125; that span reads RI. Residues 155–157, Thr-186, 216–217, and Arg-239 contribute to the D-glyceraldehyde 3-phosphate site; these read SCT and TG. Cys-156 functions as the Nucleophile in the catalytic mechanism. Residue Asn-320 participates in NAD(+) binding.

This sequence belongs to the glyceraldehyde-3-phosphate dehydrogenase family. As to quaternary structure, homotetramer.

It localises to the cytoplasm. The catalysed reaction is D-glyceraldehyde 3-phosphate + phosphate + NAD(+) = (2R)-3-phospho-glyceroyl phosphate + NADH + H(+). Its pathway is carbohydrate degradation; glycolysis; pyruvate from D-glyceraldehyde 3-phosphate: step 1/5. In terms of biological role, catalyzes the oxidative phosphorylation of glyceraldehyde 3-phosphate (G3P) to 1,3-bisphosphoglycerate (BPG) using the cofactor NAD. The first reaction step involves the formation of a hemiacetal intermediate between G3P and a cysteine residue, and this hemiacetal intermediate is then oxidized to a thioester, with concomitant reduction of NAD to NADH. The reduced NADH is then exchanged with the second NAD, and the thioester is attacked by a nucleophilic inorganic phosphate to produce BPG. This chain is Glyceraldehyde-3-phosphate dehydrogenase (gap), found in Lactobacillus delbrueckii subsp. bulgaricus.